The sequence spans 187 residues: Elongation factor P (187 aa).

This sequence belongs to the elongation factor P family.

Its subcellular location is the cytoplasm. Its pathway is protein biosynthesis; polypeptide chain elongation. Its function is as follows. Involved in peptide bond synthesis. Stimulates efficient translation and peptide-bond synthesis on native or reconstituted 70S ribosomes in vitro. Probably functions indirectly by altering the affinity of the ribosome for aminoacyl-tRNA, thus increasing their reactivity as acceptors for peptidyl transferase. This chain is Elongation factor P (efp), found in Treponema pallidum (strain Nichols).